The following is a 238-amino-acid chain: NADH-quinone oxidoreductase subunit C (238 aa).

The interval 1 to 20 (MSSPDQNPSDAAGQTGSSNE) is disordered.

The protein belongs to the complex I 30 kDa subunit family. NDH-1 is composed of 14 different subunits. Subunits NuoB, C, D, E, F, and G constitute the peripheral sector of the complex.

Its subcellular location is the cell membrane. The catalysed reaction is a quinone + NADH + 5 H(+)(in) = a quinol + NAD(+) + 4 H(+)(out). NDH-1 shuttles electrons from NADH, via FMN and iron-sulfur (Fe-S) centers, to quinones in the respiratory chain. The immediate electron acceptor for the enzyme in this species is believed to be a menaquinone. Couples the redox reaction to proton translocation (for every two electrons transferred, four hydrogen ions are translocated across the cytoplasmic membrane), and thus conserves the redox energy in a proton gradient. The sequence is that of NADH-quinone oxidoreductase subunit C from Mycobacterium ulcerans (strain Agy99).